The primary structure comprises 212 residues: Troponin I, cardiac muscle (212 aa).

Over residues 1–11 (MADRSGGSTAG) the composition is skewed to polar residues. Residues 1 to 45 (MADRSGGSTAGDTVPAPPPVRRRSSANYRAYATEPHAKKKSKISA) are disordered. A2 bears the N-acetylalanine mark. The residue at position 5 (S5) is a Phosphoserine. 2 positions are modified to phosphoserine; by PKA and PKD/PRKD1: S24 and S25. Residue Y28 is modified to Phosphotyrosine. T33 is subject to Phosphothreonine; by STK4/MST1. The tract at residues 34 to 81 (EPHAKKKSKISASRKLQLKTLMLQIAKQELEREAEERRGEKGRALSTR) is involved in binding TNC. Residues S44 and S46 each carry the phosphoserine; by PKC/PRKCE modification. A Phosphothreonine; by STK4/MST1 modification is found at T53. S79 carries the phosphoserine modification. Residue T80 is modified to Phosphothreonine. The segment at 131–151 (NQKIFDLRGKFKRPTLRRVRI) is involved in binding TNC and actin. T145 bears the Phosphothreonine; by STK4/MST1 mark. S152 is modified (phosphoserine; by PAK3). A Phosphothreonine modification is found at T183. S201 carries the phosphoserine modification.

The protein belongs to the troponin I family. Interacts with TRIM63. Binds to actin and tropomyosin. Interacts with STK4/MST1. Post-translationally, phosphorylated at Ser-24 and Ser-25 by PRKD1; phosphorylation reduces myofilament calcium sensitivity. Phosphorylated preferentially at Thr-33. Phosphorylation by STK4/MST1 alters its binding affinity to TNNC1 (cardiac Tn-C) and TNNT2 (cardiac Tn-T). Phosphorylated at Ser-44 and Ser-46 by PRKCE; phosphorylation increases myocardium contractile dysfunction.

Its function is as follows. Troponin I is the inhibitory subunit of troponin, the thin filament regulatory complex which confers calcium-sensitivity to striated muscle actomyosin ATPase activity. The sequence is that of Troponin I, cardiac muscle (TNNI3) from Bos taurus (Bovine).